A 312-amino-acid polypeptide reads, in one-letter code: Methionyl-tRNA formyltransferase (312 aa).

A (6S)-5,6,7,8-tetrahydrofolate-binding site is contributed by 111 to 114 (SLLP).

Belongs to the Fmt family.

It carries out the reaction L-methionyl-tRNA(fMet) + (6R)-10-formyltetrahydrofolate = N-formyl-L-methionyl-tRNA(fMet) + (6S)-5,6,7,8-tetrahydrofolate + H(+). Functionally, attaches a formyl group to the free amino group of methionyl-tRNA(fMet). The formyl group appears to play a dual role in the initiator identity of N-formylmethionyl-tRNA by promoting its recognition by IF2 and preventing the misappropriation of this tRNA by the elongation apparatus. The polypeptide is Methionyl-tRNA formyltransferase (Rhodopseudomonas palustris (strain HaA2)).